Here is a 401-residue protein sequence, read N- to C-terminus: ATP phosphoribosyltransferase regulatory subunit (401 aa).

This sequence belongs to the class-II aminoacyl-tRNA synthetase family. HisZ subfamily. In terms of assembly, heteromultimer composed of HisG and HisZ subunits.

It is found in the cytoplasm. It participates in amino-acid biosynthesis; L-histidine biosynthesis; L-histidine from 5-phospho-alpha-D-ribose 1-diphosphate: step 1/9. Its function is as follows. Required for the first step of histidine biosynthesis. May allow the feedback regulation of ATP phosphoribosyltransferase activity by histidine. The sequence is that of ATP phosphoribosyltransferase regulatory subunit from Desulforamulus reducens (strain ATCC BAA-1160 / DSM 100696 / MI-1) (Desulfotomaculum reducens).